We begin with the raw amino-acid sequence, 335 residues long: Methionine import ATP-binding protein MetN 1 (335 aa).

Residues 2 to 242 (IEFQNVHKTY…PKHPTTRRFV (241 aa)) enclose the ABC transporter domain. 38–45 (GHSGAGKS) is an ATP binding site.

It belongs to the ABC transporter superfamily. Methionine importer (TC 3.A.1.24) family. In terms of assembly, the complex is composed of two ATP-binding proteins (MetN), two transmembrane proteins (MetI) and a solute-binding protein (MetQ).

It localises to the cell inner membrane. It catalyses the reaction L-methionine(out) + ATP + H2O = L-methionine(in) + ADP + phosphate + H(+). The enzyme catalyses D-methionine(out) + ATP + H2O = D-methionine(in) + ADP + phosphate + H(+). Its function is as follows. Part of the ABC transporter complex MetNIQ involved in methionine import. Responsible for energy coupling to the transport system. The polypeptide is Methionine import ATP-binding protein MetN 1 (Pseudomonas fluorescens (strain ATCC BAA-477 / NRRL B-23932 / Pf-5)).